The following is a 278-amino-acid chain: 3-methyl-2-oxobutanoate hydroxymethyltransferase (278 aa).

Mg(2+) contacts are provided by aspartate 43 and aspartate 82. Residues 43–44 (DS), aspartate 82, and lysine 112 contribute to the 3-methyl-2-oxobutanoate site. A Mg(2+)-binding site is contributed by glutamate 114. Glutamate 181 acts as the Proton acceptor in catalysis.

This sequence belongs to the PanB family. In terms of assembly, homodecamer; pentamer of dimers. The cofactor is Mg(2+).

The protein localises to the cytoplasm. The enzyme catalyses 3-methyl-2-oxobutanoate + (6R)-5,10-methylene-5,6,7,8-tetrahydrofolate + H2O = 2-dehydropantoate + (6S)-5,6,7,8-tetrahydrofolate. Its pathway is cofactor biosynthesis; (R)-pantothenate biosynthesis; (R)-pantoate from 3-methyl-2-oxobutanoate: step 1/2. In terms of biological role, catalyzes the reversible reaction in which hydroxymethyl group from 5,10-methylenetetrahydrofolate is transferred onto alpha-ketoisovalerate to form ketopantoate. The sequence is that of 3-methyl-2-oxobutanoate hydroxymethyltransferase from Bacillus cereus (strain B4264).